Consider the following 309-residue polypeptide: Lipoyl synthase (309 aa).

[4Fe-4S] cluster-binding residues include C37, C42, C48, C67, C71, C74, and S281. Residues 53 to 270 (DGPGTATFML…RVAETEFGFL (218 aa)) enclose the Radical SAM core domain.

This sequence belongs to the radical SAM superfamily. Lipoyl synthase family. Requires [4Fe-4S] cluster as cofactor.

It is found in the cytoplasm. It carries out the reaction [[Fe-S] cluster scaffold protein carrying a second [4Fe-4S](2+) cluster] + N(6)-octanoyl-L-lysyl-[protein] + 2 oxidized [2Fe-2S]-[ferredoxin] + 2 S-adenosyl-L-methionine + 4 H(+) = [[Fe-S] cluster scaffold protein] + N(6)-[(R)-dihydrolipoyl]-L-lysyl-[protein] + 4 Fe(3+) + 2 hydrogen sulfide + 2 5'-deoxyadenosine + 2 L-methionine + 2 reduced [2Fe-2S]-[ferredoxin]. It participates in protein modification; protein lipoylation via endogenous pathway; protein N(6)-(lipoyl)lysine from octanoyl-[acyl-carrier-protein]: step 2/2. Its function is as follows. Catalyzes the radical-mediated insertion of two sulfur atoms into the C-6 and C-8 positions of the octanoyl moiety bound to the lipoyl domains of lipoate-dependent enzymes, thereby converting the octanoylated domains into lipoylated derivatives. This is Lipoyl synthase from Natronomonas pharaonis (strain ATCC 35678 / DSM 2160 / CIP 103997 / JCM 8858 / NBRC 14720 / NCIMB 2260 / Gabara) (Halobacterium pharaonis).